The primary structure comprises 228 residues: Leucyl/phenylalanyl-tRNA--protein transferase (228 aa).

The protein belongs to the L/F-transferase family.

The protein resides in the cytoplasm. It catalyses the reaction N-terminal L-lysyl-[protein] + L-leucyl-tRNA(Leu) = N-terminal L-leucyl-L-lysyl-[protein] + tRNA(Leu) + H(+). It carries out the reaction N-terminal L-arginyl-[protein] + L-leucyl-tRNA(Leu) = N-terminal L-leucyl-L-arginyl-[protein] + tRNA(Leu) + H(+). The enzyme catalyses L-phenylalanyl-tRNA(Phe) + an N-terminal L-alpha-aminoacyl-[protein] = an N-terminal L-phenylalanyl-L-alpha-aminoacyl-[protein] + tRNA(Phe). In terms of biological role, functions in the N-end rule pathway of protein degradation where it conjugates Leu, Phe and, less efficiently, Met from aminoacyl-tRNAs to the N-termini of proteins containing an N-terminal arginine or lysine. This Sulfurimonas denitrificans (strain ATCC 33889 / DSM 1251) (Thiomicrospira denitrificans (strain ATCC 33889 / DSM 1251)) protein is Leucyl/phenylalanyl-tRNA--protein transferase.